We begin with the raw amino-acid sequence, 345 residues long: Transcription factor STKL1 (345 aa).

A disordered region spans residues 1 to 145 (MASLENPAID…KKGHAQRVWS (145 aa)). Residues 11–22 (SSSEFESSSEEI) are compositionally biased toward low complexity. Basic and acidic residues predominate over residues 23–32 (SSSKESKPKE). Residues 37–46 (VPSTKTLNSP) show a composition bias toward polar residues. A Phosphoserine modification is found at S105. Basic and acidic residues predominate over residues 114–137 (RASEGTTSRDMHVKRIKKEGDNKK).

Belongs to the GeBP family. Expressed strongly in leaves and flowers, weakly in roots, and very weakly in stems.

It localises to the nucleus. In terms of biological role, transcription repressor that binds DNA in a sequence-specific manner, 5'-GCCT-3', to regulate the expression of PGR. Acts as a modulatory component for the glucose-triggered developmental leaf growth process. This is Transcription factor STKL1 from Arabidopsis thaliana (Mouse-ear cress).